The sequence spans 329 residues: GMP reductase (329 aa).

Cys-178 (thioimidate intermediate) is an active-site residue. An NADP(+)-binding site is contributed by Val-207 to Val-230.

This sequence belongs to the IMPDH/GMPR family. GuaC type 2 subfamily.

The enzyme catalyses IMP + NH4(+) + NADP(+) = GMP + NADPH + 2 H(+). In terms of biological role, catalyzes the irreversible NADPH-dependent deamination of GMP to IMP. It functions in the conversion of nucleobase, nucleoside and nucleotide derivatives of G to A nucleotides, and in maintaining the intracellular balance of A and G nucleotides. The protein is GMP reductase of Lactococcus lactis subsp. cremoris (strain SK11).